Reading from the N-terminus, the 306-residue chain is 2-dehydro-3-deoxy-D-gluconate/2-dehydro-3-deoxy-phosphogluconate aldolase (306 aa).

Substrate is bound by residues 61 to 62, 148 to 150, and 173 to 175; these read TT, YNY, and KDT. K173 (schiff-base intermediate with substrate) is an active-site residue.

The protein belongs to the DapA family. KDPG aldolase subfamily. As to quaternary structure, homotetramer; dimer of dimers.

It catalyses the reaction 2-dehydro-3-deoxy-6-phospho-D-gluconate = D-glyceraldehyde 3-phosphate + pyruvate. It carries out the reaction 2-dehydro-3-deoxy-D-gluconate = D-glyceraldehyde + pyruvate. It functions in the pathway carbohydrate acid metabolism; 2-dehydro-3-deoxy-D-gluconate degradation; D-glyceraldehyde 3-phosphate and pyruvate from 2-dehydro-3-deoxy-D-gluconate: step 2/2. Involved in the degradation of glucose via the Entner-Doudoroff pathway. Catalyzes the reversible cleavage of 2-keto-3-deoxy-6-phosphogluconate (KDPG) and 2-keto-3-deoxygluconate (KDG) forming pyruvate and glyceraldehyde 3-phosphate or glyceraldehyde, respectively. It is not able to use 2-keto-3-deoxy-6-phosphogalactonate (KDPGal) and 2-keto-3-deoxygalactonate (KDGal) as substrate. This is 2-dehydro-3-deoxy-D-gluconate/2-dehydro-3-deoxy-phosphogluconate aldolase (kdgA) from Thermoproteus tenax.